The primary structure comprises 145 residues: Acidic phospholipase A2 homolog textilotoxin C chain (145 aa).

The first 19 residues, 1–19 (MHPAHLLVLLGVYVSLLGA), serve as a signal peptide directing secretion. The propeptide occupies 20 to 27 (ARIPPLPL). 7 disulfides stabilise this stretch: C38/C98, C54/C144, C56/C72, C71/C125, C78/C118, C87/C111, and C105/C116.

The protein belongs to the phospholipase A2 family. Group I subfamily. D49 sub-subfamily. In terms of assembly, heterohexamer. 2 forms exist: 2 A or 2 B chains, 2 C chains and 2 covalently-linked D chains, and 1 A or 1 B, 1 C, 2 covalently-linked D chains and 2 differentially glycosylated covalently-linked D chains. Textilotoxin was originally described as pentameric. In terms of tissue distribution, expressed by the venom gland.

It is found in the secreted. Functionally, snake venom oligomeric phospholipase A2 that has potent presynaptic neurotoxicity. Chain C is not itself neurotoxic, but it is essential for the neurotoxicity of textilotoxin. Chain C possesses a very low phospholipase activity. In Pseudonaja textilis (Eastern brown snake), this protein is Acidic phospholipase A2 homolog textilotoxin C chain.